The primary structure comprises 128 residues: Ribonuclease P protein component (128 aa).

Belongs to the RnpA family. Consists of a catalytic RNA component (M1 or rnpB) and a protein subunit.

It carries out the reaction Endonucleolytic cleavage of RNA, removing 5'-extranucleotides from tRNA precursor.. Functionally, RNaseP catalyzes the removal of the 5'-leader sequence from pre-tRNA to produce the mature 5'-terminus. It can also cleave other RNA substrates such as 4.5S RNA. The protein component plays an auxiliary but essential role in vivo by binding to the 5'-leader sequence and broadening the substrate specificity of the ribozyme. This is Ribonuclease P protein component from Prochlorococcus marinus (strain AS9601).